Here is a 411-residue protein sequence, read N- to C-terminus: LL-diaminopimelate aminotransferase (411 aa).

Substrate is bound by residues tyrosine 15 and glycine 42. Residues tyrosine 72, 108–109 (SK), tyrosine 132, asparagine 187, tyrosine 218, and 246–248 (SFS) each bind pyridoxal 5'-phosphate. Substrate is bound by residues lysine 109, tyrosine 132, and asparagine 187. Lysine 249 carries the N6-(pyridoxal phosphate)lysine modification. 2 residues coordinate pyridoxal 5'-phosphate: arginine 257 and asparagine 292. Residues asparagine 292 and arginine 388 each contribute to the substrate site.

The protein belongs to the class-I pyridoxal-phosphate-dependent aminotransferase family. LL-diaminopimelate aminotransferase subfamily. In terms of assembly, homodimer. It depends on pyridoxal 5'-phosphate as a cofactor.

The enzyme catalyses (2S,6S)-2,6-diaminopimelate + 2-oxoglutarate = (S)-2,3,4,5-tetrahydrodipicolinate + L-glutamate + H2O + H(+). Its pathway is amino-acid biosynthesis; L-lysine biosynthesis via DAP pathway; LL-2,6-diaminopimelate from (S)-tetrahydrodipicolinate (aminotransferase route): step 1/1. In terms of biological role, involved in the synthesis of meso-diaminopimelate (m-DAP or DL-DAP), required for both lysine and peptidoglycan biosynthesis. Catalyzes the direct conversion of tetrahydrodipicolinate to LL-diaminopimelate. The protein is LL-diaminopimelate aminotransferase of Synechococcus sp. (strain JA-3-3Ab) (Cyanobacteria bacterium Yellowstone A-Prime).